A 355-amino-acid polypeptide reads, in one-letter code: MPMTVVSGRFSTALLPTCFSLSRLHSVKYAAQRRVVFVSRSAHASSASVSVETNSNSNVDFVIEKKDKNRGEKKILACPICYNSLAWISQPNGLIESAASGIQVQCNTCKRSYSGNETHLDLAVASGSKRYSEPMPLSTELFRTPLVSFLYERGWRQNFIWGGFPGPEKEFEMAKAYLKPVLGGNIIDASCGSGMFSRLFTRSDLFSLVIALDYSENMLRQCYELLNKEENFPNKEKLVLVRADIARLPFLSGSVDAVHAGAALHCWPSPSSAVAEISRVLRPGGVFVATTFIYDGPFSFIPFLKNLRQEIMRYSGSHIFLNERELEDICKACGLVNFTRVRNGPFIMLSATKPS.

A chloroplast-targeting transit peptide spans Met1–Val49.

It belongs to the methyltransferase superfamily.

The protein localises to the plastid. Its subcellular location is the chloroplast. The protein resides in the plastoglobule. This is an uncharacterized protein from Arabidopsis thaliana (Mouse-ear cress).